The primary structure comprises 182 residues: Heat shock protein beta-2 (182 aa).

The 109-residue stretch at 55 to 163 folds into the sHSP domain; it reads RAGEGGRAGA…DTEVNEVYIS (109 aa).

Belongs to the small heat shock protein (HSP20) family. As to quaternary structure, interacts with DMPK; may enhance its kinase activity.

Its subcellular location is the cytoplasm. It is found in the nucleus. In terms of biological role, may regulate the kinase DMPK. The chain is Heat shock protein beta-2 (Hspb2) from Rattus norvegicus (Rat).